The primary structure comprises 490 residues: Aspartyl/glutamyl-tRNA(Asn/Gln) amidotransferase subunit B (490 aa).

This sequence belongs to the GatB/GatE family. GatB subfamily. As to quaternary structure, heterotrimer of A, B and C subunits.

It catalyses the reaction L-glutamyl-tRNA(Gln) + L-glutamine + ATP + H2O = L-glutaminyl-tRNA(Gln) + L-glutamate + ADP + phosphate + H(+). It carries out the reaction L-aspartyl-tRNA(Asn) + L-glutamine + ATP + H2O = L-asparaginyl-tRNA(Asn) + L-glutamate + ADP + phosphate + 2 H(+). In terms of biological role, allows the formation of correctly charged Asn-tRNA(Asn) or Gln-tRNA(Gln) through the transamidation of misacylated Asp-tRNA(Asn) or Glu-tRNA(Gln) in organisms which lack either or both of asparaginyl-tRNA or glutaminyl-tRNA synthetases. The reaction takes place in the presence of glutamine and ATP through an activated phospho-Asp-tRNA(Asn) or phospho-Glu-tRNA(Gln). This chain is Aspartyl/glutamyl-tRNA(Asn/Gln) amidotransferase subunit B, found in Methylobacterium radiotolerans (strain ATCC 27329 / DSM 1819 / JCM 2831 / NBRC 15690 / NCIMB 10815 / 0-1).